The primary structure comprises 396 residues: Aspartate aminotransferase (396 aa).

3 residues coordinate L-aspartate: glycine 34, tryptophan 130, and asparagine 183. Residue lysine 246 is modified to N6-(pyridoxal phosphate)lysine. Arginine 374 provides a ligand contact to L-aspartate.

Belongs to the class-I pyridoxal-phosphate-dependent aminotransferase family. In terms of assembly, homodimer. The cofactor is pyridoxal 5'-phosphate.

The protein resides in the cytoplasm. The catalysed reaction is L-aspartate + 2-oxoglutarate = oxaloacetate + L-glutamate. The polypeptide is Aspartate aminotransferase (aspC) (Haemophilus influenzae (strain ATCC 51907 / DSM 11121 / KW20 / Rd)).